Consider the following 374-residue polypeptide: MKFELDTTDGRARRGRLVFERGTVETPAFMPVGTYGTVKGMTPEEVRATGADILLGNTFHLWLRPGEEIMRKHGDLHDFMNWQRPILTDSGGFQVFSLGDIRKITEEGVHFRSPINGEKIFMDAEKSMQIQYSLGSDVVMIFDECTPYPATHDEARKSMQMSLRWAQRSRDEFDRLENPNSLFGIIQGSVYEDLRDESLKGLLEIGYDGYAVGGLAVGEPKEDMHRILEHVCPQIPADKPRYLMGVGKPEDLVEGVRRGVDMFDCVMPTRNARNGHLFTSEGVIKIRNARHRDDTSPLDAKCDCYTCKNYSRAYLYHLDRCNEILGARLNTIHNLRYYQMLMEGLRGAIETGTLDAFVEEFYTSQGREVPKLSD.

D89 acts as the Proton acceptor in catalysis. Substrate-binding positions include 89–93 (DSGGF), D143, Q187, and G214. The segment at 245-251 (GVGKPED) is RNA binding. D264 (nucleophile) is an active-site residue. The segment at 269–273 (TRNAR) is RNA binding; important for wobble base 34 recognition. Positions 302, 304, 307, and 333 each coordinate Zn(2+).

This sequence belongs to the queuine tRNA-ribosyltransferase family. In terms of assembly, homodimer. Within each dimer, one monomer is responsible for RNA recognition and catalysis, while the other monomer binds to the replacement base PreQ1. The cofactor is Zn(2+).

It catalyses the reaction 7-aminomethyl-7-carbaguanine + guanosine(34) in tRNA = 7-aminomethyl-7-carbaguanosine(34) in tRNA + guanine. Its pathway is tRNA modification; tRNA-queuosine biosynthesis. In terms of biological role, catalyzes the base-exchange of a guanine (G) residue with the queuine precursor 7-aminomethyl-7-deazaguanine (PreQ1) at position 34 (anticodon wobble position) in tRNAs with GU(N) anticodons (tRNA-Asp, -Asn, -His and -Tyr). Catalysis occurs through a double-displacement mechanism. The nucleophile active site attacks the C1' of nucleotide 34 to detach the guanine base from the RNA, forming a covalent enzyme-RNA intermediate. The proton acceptor active site deprotonates the incoming PreQ1, allowing a nucleophilic attack on the C1' of the ribose to form the product. After dissociation, two additional enzymatic reactions on the tRNA convert PreQ1 to queuine (Q), resulting in the hypermodified nucleoside queuosine (7-(((4,5-cis-dihydroxy-2-cyclopenten-1-yl)amino)methyl)-7-deazaguanosine). This Shewanella loihica (strain ATCC BAA-1088 / PV-4) protein is Queuine tRNA-ribosyltransferase.